A 147-amino-acid chain; its full sequence is Phosphoribosyl-AMP cyclohydrolase (147 aa).

Asp97 contributes to the Mg(2+) binding site. Residue Cys98 coordinates Zn(2+). Residues Asp99 and Asp101 each contribute to the Mg(2+) site. 2 residues coordinate Zn(2+): Cys114 and Cys121.

It belongs to the PRA-CH family. Homodimer. The cofactor is Mg(2+). Zn(2+) is required as a cofactor.

Its subcellular location is the cytoplasm. The enzyme catalyses 1-(5-phospho-beta-D-ribosyl)-5'-AMP + H2O = 1-(5-phospho-beta-D-ribosyl)-5-[(5-phospho-beta-D-ribosylamino)methylideneamino]imidazole-4-carboxamide. Its pathway is amino-acid biosynthesis; L-histidine biosynthesis; L-histidine from 5-phospho-alpha-D-ribose 1-diphosphate: step 3/9. Catalyzes the hydrolysis of the adenine ring of phosphoribosyl-AMP. The sequence is that of Phosphoribosyl-AMP cyclohydrolase from Hydrogenovibrio crunogenus (strain DSM 25203 / XCL-2) (Thiomicrospira crunogena).